The following is a 546-amino-acid chain: Arginine--tRNA ligase (546 aa).

The 'HIGH' region motif lies at Ala122–His132.

It belongs to the class-I aminoacyl-tRNA synthetase family. In terms of assembly, monomer.

It localises to the cytoplasm. The catalysed reaction is tRNA(Arg) + L-arginine + ATP = L-arginyl-tRNA(Arg) + AMP + diphosphate. In Thermotoga maritima (strain ATCC 43589 / DSM 3109 / JCM 10099 / NBRC 100826 / MSB8), this protein is Arginine--tRNA ligase (argS).